A 281-amino-acid polypeptide reads, in one-letter code: Elongation factor Ts (281 aa).

Residues 79–82 (TDFV) form an involved in Mg(2+) ion dislocation from EF-Tu region.

The protein belongs to the EF-Ts family.

Its subcellular location is the cytoplasm. Functionally, associates with the EF-Tu.GDP complex and induces the exchange of GDP to GTP. It remains bound to the aminoacyl-tRNA.EF-Tu.GTP complex up to the GTP hydrolysis stage on the ribosome. The chain is Elongation factor Ts from Wolbachia pipientis subsp. Culex pipiens (strain wPip).